Reading from the N-terminus, the 82-residue chain is Small ribosomal subunit protein bS16 (82 aa).

Belongs to the bacterial ribosomal protein bS16 family.

This is Small ribosomal subunit protein bS16 from Alcanivorax borkumensis (strain ATCC 700651 / DSM 11573 / NCIMB 13689 / SK2).